Consider the following 337-residue polypeptide: Ferredoxin--NADP reductase (337 aa).

The FAD site is built by Asp-35, Gln-43, Tyr-48, Ala-88, Phe-122, Asp-289, and Thr-330.

Belongs to the ferredoxin--NADP reductase type 2 family. Homodimer. The cofactor is FAD.

It carries out the reaction 2 reduced [2Fe-2S]-[ferredoxin] + NADP(+) + H(+) = 2 oxidized [2Fe-2S]-[ferredoxin] + NADPH. The polypeptide is Ferredoxin--NADP reductase (Ehrlichia ruminantium (strain Gardel)).